Consider the following 339-residue polypeptide: D-erythrose-4-phosphate dehydrogenase (339 aa).

11-12 (RI) contributes to the NAD(+) binding site. Substrate-binding positions include 153–155 (SCT), R199, 212–213 (TK), and R235. C154 serves as the catalytic Nucleophile. N317 serves as a coordination point for NAD(+).

It belongs to the glyceraldehyde-3-phosphate dehydrogenase family. Epd subfamily. Homotetramer.

The protein resides in the cytoplasm. The catalysed reaction is D-erythrose 4-phosphate + NAD(+) + H2O = 4-phospho-D-erythronate + NADH + 2 H(+). Its pathway is cofactor biosynthesis; pyridoxine 5'-phosphate biosynthesis; pyridoxine 5'-phosphate from D-erythrose 4-phosphate: step 1/5. In terms of biological role, catalyzes the NAD-dependent conversion of D-erythrose 4-phosphate to 4-phosphoerythronate. This chain is D-erythrose-4-phosphate dehydrogenase, found in Shewanella frigidimarina (strain NCIMB 400).